A 73-amino-acid chain; its full sequence is Large ribosomal subunit protein bL31 (73 aa).

Zn(2+) is bound by residues Cys-16, Cys-18, Cys-37, and Cys-40.

This sequence belongs to the bacterial ribosomal protein bL31 family. Type A subfamily. Part of the 50S ribosomal subunit. The cofactor is Zn(2+).

In terms of biological role, binds the 23S rRNA. This is Large ribosomal subunit protein bL31 from Pseudomonas fluorescens (strain ATCC BAA-477 / NRRL B-23932 / Pf-5).